The chain runs to 493 residues: MFKLALTLTLCLAGSLSLAQHNPHWWGNRNTIVHLFEWKWSDIAQECESFLGPRGFAGVQVSPVNENIIAAGRPWWERYQPISYKLTTRSGNEEEFGDMVRRCNDVGVRIYVDVLLNHMSGDFDGVVVGTAGTEAEPREKSFPGVPYTAQDFHPTCEITDWNDRFQVQQCELVGLKDLDQSSDWVRSKLIEFLDHLIELGVAGFRVDAAKHMASEDLEYIYSSLSNLNIDHGFPHNSRPFIFQEVIDHGHETVSRDEYKDLGAVTEFRFSEEIGNAFRGNNALKWLQSWGTGWGFLPSGQALTFVDNHDNQRDAGAVLNYKSPKQYKMATAFHLAYPYGISRVMSSFAFDDHDTPPPQDAQERIVSPEFDEDGACVNGWICEHRWRQIYAMVGFKNAVRDTEVTGWWDNGDNQISFCRGNKGFLAINNNLYDLSQDLNTCLPEGTYCDVISGSLIDGSCTGKSVTVNEYGFGYIHIGSDDFDGVLALHVDARV.

An N-terminal signal peptide occupies residues 1–19 (MFKLALTLTLCLAGSLSLA). Position 20 is a pyrrolidone carboxylic acid (Gln20). Cysteines 47 and 103 form a disulfide. Residues Asn117, Gln168, and Asp177 each contribute to the Ca(2+) site. A disulfide bridge connects residues Cys156 and Cys170. Residue Arg205 coordinates chloride. Asp207 acts as the Nucleophile in catalysis. His211 contributes to the Ca(2+) binding site. The active-site Proton donor is the Glu244. Chloride is bound by residues Asn307 and Arg342. Disulfide bonds link Cys375/Cys381, Cys417/Cys440, and Cys447/Cys459.

This sequence belongs to the glycosyl hydrolase 13 family. Monomer. The cofactor is Ca(2+). Chloride is required as a cofactor.

The protein localises to the secreted. The catalysed reaction is Endohydrolysis of (1-&gt;4)-alpha-D-glucosidic linkages in polysaccharides containing three or more (1-&gt;4)-alpha-linked D-glucose units.. The protein is Alpha-amylase-related protein (Amyrel) of Drosophila teissieri (Fruit fly).